A 220-amino-acid chain; its full sequence is Iron-sulfur cluster repair protein YtfE (220 aa).

It belongs to the RIC family. YtfE subfamily. In terms of assembly, homodimer.

The protein localises to the cytoplasm. Di-iron-containing protein involved in the repair of iron-sulfur clusters damaged by oxidative and nitrosative stress conditions. The protein is Iron-sulfur cluster repair protein YtfE of Escherichia coli O6:K15:H31 (strain 536 / UPEC).